A 306-amino-acid polypeptide reads, in one-letter code: Transcription factor MYBS1 (306 aa).

A Myb-like domain is found at 18–73; sequence WTREDDKAFENALAACAAPPPADGGAPDDDWFAALAASVPGARSAEEVRRHYEALV. Positions 72–86 match the Nuclear export signal 1 motif; the sequence is LVEDVAAIDAGRVPL. The tract at residues 89–142 is disordered; it reads YAGEESAAPPDGAGAAAAASKDGGHRRDERKGGGGGYDGGKSCSKAEQERRKGI. A compositionally biased stretch (low complexity) spans 92-109; the sequence is EESAAPPDGAGAAAAASK. Basic and acidic residues-rich tracts occupy residues 110–120 and 132–142; these read DGGHRRDERKG and SKAEQERRKGI. The Nuclear localization signal 1 motif lies at 133-140; that stretch reads KAEQERRK. Residues 136–192 enclose the HTH myb-type domain; the sequence is QERRKGIPWTEEEHRLFLLGLDKFGKGDWRSISRNFVISRTPTQVASHAQKYFIRLN. The H-T-H motif DNA-binding region spans 164 to 188; it reads WRSISRNFVISRTPTQVASHAQKYF. The short motif at 196–200 is the Nuclear localization signal 2 element; that stretch reads RDRRR. The Nuclear export signal 2 motif lies at 203-215; the sequence is IHDITSVTAGDQV. Residues 228–241 show a composition bias toward low complexity; sequence ATGNPAAAALGPPG. A disordered region spans residues 228–255; it reads ATGNPAAAALGPPGMKHHHHHHPGGAPP.

Homodimer. Interacts with GAMYB. As to expression, expressed in aboveground tissues, with the highest level in leaves.

The protein localises to the nucleus. The protein resides in the cytoplasm. In terms of biological role, transcription activator that binds to 5'-TATCCA-3' elements in gene promoters. Derepresses strongly the sugar-repressed transcription of promoters containing SRS or 5'-TATCCA-3' elements. Functions with GAMYB to integrate diverse nutrient starvation and gibberellin (GA) signaling pathways during germination of grains. Sugar, nitrogen and phosphate starvation signals converge and interconnect with GA to promote the co-nuclear import of MYBS1 and GAMYB, resulting in the expression of a large set of GA-inducible hydrolases, transporters, and regulators that are essential for mobilization of nutrient reserves in the endosperm to support seedling growth. This chain is Transcription factor MYBS1, found in Oryza sativa subsp. japonica (Rice).